We begin with the raw amino-acid sequence, 196 residues long: Holliday junction resolvase RecU (196 aa).

The Mg(2+) site is built by Thr-82, Asp-84, Glu-97, and Gln-116.

This sequence belongs to the RecU family. It depends on Mg(2+) as a cofactor.

It localises to the cytoplasm. It catalyses the reaction Endonucleolytic cleavage at a junction such as a reciprocal single-stranded crossover between two homologous DNA duplexes (Holliday junction).. Functionally, endonuclease that resolves Holliday junction intermediates in genetic recombination. Cleaves mobile four-strand junctions by introducing symmetrical nicks in paired strands. Promotes annealing of linear ssDNA with homologous dsDNA. Required for DNA repair, homologous recombination and chromosome segregation. This chain is Holliday junction resolvase RecU, found in Oceanobacillus iheyensis (strain DSM 14371 / CIP 107618 / JCM 11309 / KCTC 3954 / HTE831).